The chain runs to 107 residues: GNLWVGNEKMTMKNLNDRLASYLEKVRSLEQSNSKFELQIKQWYESNTPGISRDHSAYLQQIQDLRNQIRDAQLQNARCVLQIDNAKLAAEDFRLKYETERGIRLAV.

A head region spans residues 1–7 (GNLWVGN). Residues 8–43 (EKMTMKNLNDRLASYLEKVRSLEQSNSKFELQIKQW) form a coil 1A region. The IF rod domain maps to 8–107 (EKMTMKNLND…ETERGIRLAV (100 aa)). The tract at residues 44–61 (YESNTPGISRDHSAYLQQ) is linker 1. Positions 62 to 107 (IQDLRNQIRDAQLQNARCVLQIDNAKLAAEDFRLKYETERGIRLAV) are coil 1B.

This sequence belongs to the intermediate filament family. As to quaternary structure, heterotetramer of two type I and two type II keratins. Associates with KRT8.

Functionally, plays a significant role in maintaining keratin filament organization in intestinal epithelia. When phosphorylated, plays a role in the secretion of mucin in the small intestine. This chain is Keratin, type I cytoskeletal 20, found in Sus scrofa (Pig).